Here is a 269-residue protein sequence, read N- to C-terminus: Shikimate dehydrogenase (NADP(+)) (269 aa).

Shikimate contacts are provided by residues 17-19 and Thr-64; that span reads SKS. Lys-68 (proton acceptor) is an active-site residue. Asp-80 provides a ligand contact to NADP(+). Shikimate contacts are provided by Asn-89 and Asp-105. Residues 130-134, 154-159, and Met-213 contribute to the NADP(+) site; these read GAGGA and NRTRAK. Tyr-215 lines the shikimate pocket. Gly-237 contacts NADP(+).

Belongs to the shikimate dehydrogenase family. As to quaternary structure, homodimer.

It catalyses the reaction shikimate + NADP(+) = 3-dehydroshikimate + NADPH + H(+). Its pathway is metabolic intermediate biosynthesis; chorismate biosynthesis; chorismate from D-erythrose 4-phosphate and phosphoenolpyruvate: step 4/7. Its function is as follows. Involved in the biosynthesis of the chorismate, which leads to the biosynthesis of aromatic amino acids. Catalyzes the reversible NADPH linked reduction of 3-dehydroshikimate (DHSA) to yield shikimate (SA). The sequence is that of Shikimate dehydrogenase (NADP(+)) from Neisseria meningitidis serogroup C (strain 053442).